A 192-amino-acid chain; its full sequence is Crossover junction endodeoxyribonuclease RuvC (192 aa).

Residues Asp8, Glu67, and Asp139 contribute to the active site. Mg(2+) is bound by residues Asp8, Glu67, and Asp139.

The protein belongs to the RuvC family. In terms of assembly, homodimer which binds Holliday junction (HJ) DNA. The HJ becomes 2-fold symmetrical on binding to RuvC with unstacked arms; it has a different conformation from HJ DNA in complex with RuvA. In the full resolvosome a probable DNA-RuvA(4)-RuvB(12)-RuvC(2) complex forms which resolves the HJ. It depends on Mg(2+) as a cofactor.

The protein resides in the cytoplasm. It carries out the reaction Endonucleolytic cleavage at a junction such as a reciprocal single-stranded crossover between two homologous DNA duplexes (Holliday junction).. Its function is as follows. The RuvA-RuvB-RuvC complex processes Holliday junction (HJ) DNA during genetic recombination and DNA repair. Endonuclease that resolves HJ intermediates. Cleaves cruciform DNA by making single-stranded nicks across the HJ at symmetrical positions within the homologous arms, yielding a 5'-phosphate and a 3'-hydroxyl group; requires a central core of homology in the junction. The consensus cleavage sequence is 5'-(A/T)TT(C/G)-3'. Cleavage occurs on the 3'-side of the TT dinucleotide at the point of strand exchange. HJ branch migration catalyzed by RuvA-RuvB allows RuvC to scan DNA until it finds its consensus sequence, where it cleaves and resolves the cruciform DNA. This Haemophilus ducreyi (strain 35000HP / ATCC 700724) protein is Crossover junction endodeoxyribonuclease RuvC.